The primary structure comprises 243 residues: 3,4-dihydroxyphthalate decarboxylase (243 aa).

Glu86 functions as the Proton donor/acceptor in the catalytic mechanism. A divalent metal cation is bound by residues Glu86, His105, His107, and His173.

Belongs to the aldolase class II family. A divalent metal cation is required as a cofactor.

The catalysed reaction is 3,4-dihydroxyphthalate + H(+) = 3,4-dihydroxybenzoate + CO2. The protein operates within xenobiotic degradation; phthalate degradation. Functionally, catalyzes the decarboxylation of 3,4-dihydroxyphthalate to protocatechuate (3,4-dihydroxybenzoate) during phthalate metabolism. This Rhodococcus jostii (strain RHA1) protein is 3,4-dihydroxyphthalate decarboxylase.